The primary structure comprises 578 residues: Kelch repeat-containing protein kel-10 (578 aa).

Residues 51-118 (PTVTLVLRNN…PKAFEQGIKP (68 aa)) form the BTB domain. A BACK domain is found at 158–236 (IKIFRLALLY…NSPLQSDRMA (79 aa)). 6 Kelch repeats span residues 265–315 (AIVC…VVED), 316–362 (KLIV…RIND), 368–414 (LIFA…TIDN), 416–462 (IVVI…SIMN), 464–510 (VCMI…QMDT), and 512–558 (SIYV…TLSD).

The polypeptide is Kelch repeat-containing protein kel-10 (Caenorhabditis elegans).